Reading from the N-terminus, the 136-residue chain is Small ribosomal subunit protein uS19 (136 aa).

It belongs to the universal ribosomal protein uS19 family.

Functionally, protein S19 forms a complex with S13 that binds strongly to the 16S ribosomal RNA. The polypeptide is Small ribosomal subunit protein uS19 (Methanosarcina mazei (strain ATCC BAA-159 / DSM 3647 / Goe1 / Go1 / JCM 11833 / OCM 88) (Methanosarcina frisia)).